The following is an 80-amino-acid chain: MLRRNPTAIQITAEDVLAYDEEKLRQTLDSESTTEEALQKNEESTRLSPEKKKIIRERRIGITQIFDSSMHPSQGGAAQS.

M1 is subject to N-acetylmethionine. The tract at residues 26–54 is disordered; that stretch reads QTLDSESTTEEALQKNEESTRLSPEKKKI. Residues 37–54 show a composition bias toward basic and acidic residues; that stretch reads ALQKNEESTRLSPEKKKI.

As to quaternary structure, the APC/C is composed of at least 13 subunits: apc1, apc2, nuc2, apc4, apc5, cut9, apc8, apc10, apc11, hcn1, apc13, apc14 and apc15. Interacts directly (via N-terminus) with cut9.

Its function is as follows. Component of the anaphase promoting complex/cyclosome (APC/C), a cell cycle-regulated E3 ubiquitin-protein ligase complex that controls progression through mitosis and the G1 phase of the cell cycle. The APC/C is thought to confer substrate specificity and, in the presence of ubiquitin-conjugating E2 enzymes, it catalyzes the formation of protein-ubiquitin conjugates that are subsequently degraded by the 26S proteasome. Has a role in assembling cut9 in the 20S APC/cyclosome. The polypeptide is Anaphase-promoting complex subunit hcn1 (hcn1) (Schizosaccharomyces pombe (strain 972 / ATCC 24843) (Fission yeast)).